The primary structure comprises 1330 residues: DNA-directed RNA polymerase subunit beta'' (1330 aa).

Zn(2+)-binding residues include C214, C282, C289, and C292.

Belongs to the RNA polymerase beta' chain family. RpoC2 subfamily. In terms of assembly, in plastids the minimal PEP RNA polymerase catalytic core is composed of four subunits: alpha, beta, beta', and beta''. When a (nuclear-encoded) sigma factor is associated with the core the holoenzyme is formed, which can initiate transcription. The cofactor is Zn(2+).

Its subcellular location is the plastid. It localises to the chloroplast. The catalysed reaction is RNA(n) + a ribonucleoside 5'-triphosphate = RNA(n+1) + diphosphate. In terms of biological role, DNA-dependent RNA polymerase catalyzes the transcription of DNA into RNA using the four ribonucleoside triphosphates as substrates. This chain is DNA-directed RNA polymerase subunit beta'', found in Physcomitrium patens (Spreading-leaved earth moss).